Reading from the N-terminus, the 618-residue chain is C2H2 finger domain transcription factor sebA (618 aa).

A disordered region spans residues 394 to 488 (GDATQSTEEM…RGRKQSLTDD (95 aa)). Basic residues predominate over residues 406–416 (KKRVTSRRSLK). Composition is skewed to low complexity over residues 417 to 432 (KASTSESSSDSLAKKT) and 443 to 458 (SDTTSTVQQSTASSRQ). A compositionally biased stretch (polar residues) spans 459–469 (NSTANTSNSES). 2 C2H2-type zinc fingers span residues 493 to 516 (FVCSLCSRRFRRQEHLKRHYRSLH) and 522 to 544 (FECHECGKKFSRSDNLAQHARTH). Low complexity predominate over residues 582-597 (NAATSKSTTSESSDGT). Positions 582-618 (NAATSKSTTSESSDGTISDTSSVGGRPAKKRRRDDHV) are disordered. Residues 608–618 (PAKKRRRDDHV) show a composition bias toward basic residues.

Its subcellular location is the nucleus. The protein resides in the cytoplasm. Its function is as follows. Transcription factor that is involved in the response to heat shock, oxidative stress, and poor nutrient conditions. Controls expression of oxidative stress response genes such as ccp1, cat1, cat2, sod2; as well as of heat shock genes such as hsf1, hsp30 and hsp90. Negatively controls the expression of the fumiquinazoline (fmq) cluster via binding to the STRE motifs at the fmqA-D promoters. Plays a role in virulence. The chain is C2H2 finger domain transcription factor sebA from Aspergillus fumigatus (strain ATCC MYA-4609 / CBS 101355 / FGSC A1100 / Af293) (Neosartorya fumigata).